The sequence spans 387 residues: MIKSAILVLEDGTQFHGRAIGAEGAAVGEVVFNTSMTGYQEILTDPSYSRQIVTLTYPHIGNVGVNSVDKESLKVQAQGLVIRDLPLLTSNFRCEETLSDYLKRHNIVAIADIDTRKLTRLLREKGSQNGCIIAGKQIDAQVALEKAQAFPGLEGMDLAKEVTTKQIYPWLQGSWKLAGGLPEDKQEQDLPYHVVAYDFGAKRNILRMLVDRGCRLTVVPAQTSAEDVLKLNPDGIFLSNGPGDPAPCGYAIDAVKTLLETEIPIFGICLGHQLLALASGAETMKMKFGHHGGNHPVKDLECNVVMITAQNHGFAVDEKSLPSNLRVTHKSLFDGTLQGIHRTDKPAFSFQGHPEASPGPHETASLFDHFIELIEQYCQKNNRHNTK.

The interval 1-189 (MIKSAILVLE…GLPEDKQEQD (189 aa)) is CPSase. L-glutamine-binding residues include serine 47, glycine 241, and glycine 243. Positions 193–380 (HVVAYDFGAK…IELIEQYCQK (188 aa)) constitute a Glutamine amidotransferase type-1 domain. Catalysis depends on cysteine 269, which acts as the Nucleophile. Residues leucine 270, glutamine 273, asparagine 311, glycine 313, and phenylalanine 314 each coordinate L-glutamine. Catalysis depends on residues histidine 353 and glutamate 355.

This sequence belongs to the CarA family. In terms of assembly, composed of two chains; the small (or glutamine) chain promotes the hydrolysis of glutamine to ammonia, which is used by the large (or ammonia) chain to synthesize carbamoyl phosphate. Tetramer of heterodimers (alpha,beta)4.

It catalyses the reaction hydrogencarbonate + L-glutamine + 2 ATP + H2O = carbamoyl phosphate + L-glutamate + 2 ADP + phosphate + 2 H(+). It carries out the reaction L-glutamine + H2O = L-glutamate + NH4(+). The protein operates within amino-acid biosynthesis; L-arginine biosynthesis; carbamoyl phosphate from bicarbonate: step 1/1. It functions in the pathway pyrimidine metabolism; UMP biosynthesis via de novo pathway; (S)-dihydroorotate from bicarbonate: step 1/3. Small subunit of the glutamine-dependent carbamoyl phosphate synthetase (CPSase). CPSase catalyzes the formation of carbamoyl phosphate from the ammonia moiety of glutamine, carbonate, and phosphate donated by ATP, constituting the first step of 2 biosynthetic pathways, one leading to arginine and/or urea and the other to pyrimidine nucleotides. The small subunit (glutamine amidotransferase) binds and cleaves glutamine to supply the large subunit with the substrate ammonia. The chain is Carbamoyl phosphate synthase small chain from Photorhabdus laumondii subsp. laumondii (strain DSM 15139 / CIP 105565 / TT01) (Photorhabdus luminescens subsp. laumondii).